Consider the following 37-residue polypeptide: Large ribosomal subunit protein bL36A (37 aa).

The protein belongs to the bacterial ribosomal protein bL36 family.

The sequence is that of Large ribosomal subunit protein bL36A from Kocuria rhizophila (strain ATCC 9341 / DSM 348 / NBRC 103217 / DC2201).